Consider the following 154-residue polypeptide: Large ribosomal subunit protein uL13 (154 aa).

This sequence belongs to the universal ribosomal protein uL13 family. In terms of assembly, part of the 50S ribosomal subunit.

Functionally, this protein is one of the early assembly proteins of the 50S ribosomal subunit, although it is not seen to bind rRNA by itself. It is important during the early stages of 50S assembly. In Cereibacter sphaeroides (strain ATCC 17029 / ATH 2.4.9) (Rhodobacter sphaeroides), this protein is Large ribosomal subunit protein uL13.